The primary structure comprises 201 residues: Small ribosomal subunit protein uS4 (201 aa).

Residues 91–154 (SRLDNVIYRA…QKMEWFEEAQ (64 aa)) form the S4 RNA-binding domain.

This sequence belongs to the universal ribosomal protein uS4 family. As to quaternary structure, part of the 30S ribosomal subunit. Contacts protein S5. The interaction surface between S4 and S5 is involved in control of translational fidelity.

One of the primary rRNA binding proteins, it binds directly to 16S rRNA where it nucleates assembly of the body of the 30S subunit. Functionally, with S5 and S12 plays an important role in translational accuracy. This Corynebacterium aurimucosum (strain ATCC 700975 / DSM 44827 / CIP 107346 / CN-1) (Corynebacterium nigricans) protein is Small ribosomal subunit protein uS4.